A 248-amino-acid polypeptide reads, in one-letter code: 14-3-3 protein sigma (248 aa).

A phosphoserine mark is found at Ser5, Ser74, and Ser248.

This sequence belongs to the 14-3-3 family. Homodimer. Interacts with KRT17 and SAMSN1. Found in a complex with XPO7, EIF4A1, ARHGAP1, VPS26A, VPS29 and VPS35. Interacts with GAB2. Interacts with SRPK2. Interacts with COPS6. Interacts with COP1; this interaction leads to proteasomal degradation. Interacts with the 'Thr-369' phosphorylated form of DAPK2. Interacts with PI4KB. Interacts with SLITRK1. Interacts with LRRK2; this interaction is dependent on LRRK2 phosphorylation. Interacts with PKP3 (via N-terminus); the interaction maintains the cytoplasmic pool of PKP3, facilitates PKP3 exchange at desmosomes and restricts PKP3 localization to existing desmosome cell junctions. Interacts with LCP2. Post-translationally, ubiquitinated. Ubiquitination by RFFL induces proteasomal degradation and indirectly regulates p53/TP53 activation. As to expression, expressed in dorsal skin (at protein level). Expressed in the basal layer of skin epithelium and in outer root sheath of hair follicle.

The protein localises to the cytoplasm. Its subcellular location is the nucleus. The protein resides in the secreted. Its function is as follows. Adapter protein implicated in the regulation of a large spectrum of both general and specialized signaling pathways. Binds to a large number of partners, usually by recognition of a phosphoserine or phosphothreonine motif. Binding generally results in the modulation of the activity of the binding partner. Promotes cytosolic retention of GBP1 GTPase by binding to phosphorylated GBP1, thereby inhibiting the innate immune response. Also acts as a TP53/p53-regulated inhibitor of G2/M progression. When bound to KRT17, regulates protein synthesis and epithelial cell growth by stimulating Akt/mTOR pathway. Acts to maintain desmosome cell junction adhesion in epithelial cells via interacting with and sequestering PKP3 to the cytoplasm, thereby restricting its translocation to existing desmosome structures and therefore maintaining desmosome protein homeostasis. Also acts to facilitate PKP3 exchange at desmosome plaques, thereby maintaining keratinocyte intercellular adhesion. May also regulate MDM2 autoubiquitination and degradation and thereby activate p53/TP53. In Mus musculus (Mouse), this protein is 14-3-3 protein sigma (Sfn).